Here is a 392-residue protein sequence, read N- to C-terminus: MTVLGTALRPAATKVMLLGSGELGKEVAIECQRLGIETIAVDRYPDAPAMQVAHRAHVINMLHGESLRALIEQEKPDYIVPEIEAIATDTLVELEQAGQKVVPTARAAKLTMNREGIRRLAAEELQLPTSSYRFADSEEGFRAAVTDIGLPCIVKPVMSSSGKGQSFIRSADQLSEAWRYAQQGGRAGAGRVIVEGVVNFDFEITLLTVSAVDGVHFCAPVGHRQEDGDYRESWQPQQMSDLALERAQAIARKVVLALGGHGLFGVELFVCGDEVIFSEVSPRPHDTGMVTLISQDLSEFALHVRAFLGLPVGAIRQYGPAASAVILPQLTSQNVSFGQLQSAVGAGLQLRLFGKPEIDGTRRLGVTLAVADSVEEAVARAKTAAAAVIVEG.

N(1)-(5-phospho-beta-D-ribosyl)glycinamide contacts are provided by residues 22–23 (EL) and glutamate 82. ATP is bound by residues arginine 114, lysine 155, 160 to 165 (SSGKGQ), 195 to 198 (EGVV), and glutamate 203. The ATP-grasp domain maps to 119-308 (RLAAEELQLP…EFALHVRAFL (190 aa)). Glutamate 267 and glutamate 279 together coordinate Mg(2+). Residues aspartate 286, lysine 355, and 362 to 363 (RR) contribute to the N(1)-(5-phospho-beta-D-ribosyl)glycinamide site.

The protein belongs to the PurK/PurT family. Homodimer.

It carries out the reaction N(1)-(5-phospho-beta-D-ribosyl)glycinamide + formate + ATP = N(2)-formyl-N(1)-(5-phospho-beta-D-ribosyl)glycinamide + ADP + phosphate + H(+). It functions in the pathway purine metabolism; IMP biosynthesis via de novo pathway; N(2)-formyl-N(1)-(5-phospho-D-ribosyl)glycinamide from N(1)-(5-phospho-D-ribosyl)glycinamide (formate route): step 1/1. Involved in the de novo purine biosynthesis. Catalyzes the transfer of formate to 5-phospho-ribosyl-glycinamide (GAR), producing 5-phospho-ribosyl-N-formylglycinamide (FGAR). Formate is provided by PurU via hydrolysis of 10-formyl-tetrahydrofolate. This Klebsiella pneumoniae (strain 342) protein is Formate-dependent phosphoribosylglycinamide formyltransferase.